Consider the following 119-residue polypeptide: Large ribosomal subunit protein uL14 (119 aa).

This sequence belongs to the universal ribosomal protein uL14 family. In terms of assembly, part of the 50S ribosomal subunit. Forms a cluster with proteins L3 and L19. In the 70S ribosome, L14 and L19 interact and together make contacts with the 16S rRNA in bridges B5 and B8.

Binds to 23S rRNA. Forms part of two intersubunit bridges in the 70S ribosome. The chain is Large ribosomal subunit protein uL14 from Anaplasma marginale (strain St. Maries).